A 185-amino-acid polypeptide reads, in one-letter code: Peptide deformylase (185 aa).

C109 and H152 together coordinate Fe cation. E153 is a catalytic residue. Position 156 (H156) interacts with Fe cation.

The protein belongs to the polypeptide deformylase family. The cofactor is Fe(2+).

It catalyses the reaction N-terminal N-formyl-L-methionyl-[peptide] + H2O = N-terminal L-methionyl-[peptide] + formate. Removes the formyl group from the N-terminal Met of newly synthesized proteins. Requires at least a dipeptide for an efficient rate of reaction. N-terminal L-methionine is a prerequisite for activity but the enzyme has broad specificity at other positions. The polypeptide is Peptide deformylase (Roseiflexus sp. (strain RS-1)).